The chain runs to 469 residues: Zinc transporter SLC39A7 (469 aa).

Residues 10 to 30 (WVAVGLLTWATLGLLVAGLGG) form a helical membrane-spanning segment. 2 stretches are compositionally biased toward basic and acidic residues: residues 42–56 (FHGHSHRHSHEDFHH) and 66–114 (HTHE…EHSH). The tract at residues 42–121 (FHGHSHRHSH…HSHGGYGESG (80 aa)) is disordered. Histidine 66 is modified (pros-methylhistidine). The next 3 membrane-spanning stretches (helical) occupy residues 138-158 (ALGATVLISAAPFFVLFLIPV), 169-189 (LQILLSFASGGLLGDAFLHLI), and 214-234 (GPILSVGLWVLSGIVAFLVVE). Residues 242-263 (GGHGHSHGHGHAHSHTRGSHGH) show a composition bias toward basic residues. Residues 242 to 310 (GGHGHSHGHG…VRPQNAEEEK (69 aa)) form a disordered region. Residues 264 to 285 (GRQERSTKEKQSSEEEEKETRG) are compositionally biased toward basic and acidic residues. Serine 275 and serine 276 each carry phosphoserine; by CK2. 2 consecutive transmembrane segments (helical) span residues 381-401 (MRLQLLTAVGALAGTACALLT) and 417-436 (GWVLPFTAGGFIYVATVSVL).

This sequence belongs to the ZIP transporter (TC 2.A.5) family. KE4/Catsup subfamily. As to quaternary structure, homodimer. In terms of processing, rapidly phosphorylated by CK2 following Zn(2+) treatment. This phosphorylation is required for efficient cytosolic Zn(2+) release. Methylation at some His residue by METTL9 leads to reduced zinc-binding. As to expression, widely expressed.

The protein localises to the endoplasmic reticulum membrane. Its subcellular location is the golgi apparatus. It localises to the cis-Golgi network membrane. It catalyses the reaction Zn(2+)(in) = Zn(2+)(out). With respect to regulation, phosphorylation activates zinc transport activity. Transports Zn(2+) from the endoplasmic reticulum (ER)/Golgi apparatus to the cytosol, playing an essential role in the regulation of cytosolic zinc levels. Acts as a gatekeeper of zinc release from intracellular stores, requiring post-translational activation by phosphorylation, resulting in activation of multiple downstream pathways leading to cell growth and proliferation. Has an essential role in B cell development and is required for proper B cell receptor signaling. Plays an important role in maintaining intestinal epithelial homeostasis and skin dermis development by regulating ER function. Controls cell signaling pathways involved in glucose metabolism in skeletal muscle. Has a protective role against ER stress in different biological contexts. Mediates Zn(2+)-induced ferroptosis. The sequence is that of Zinc transporter SLC39A7 (SLC39A7) from Homo sapiens (Human).